A 215-amino-acid chain; its full sequence is Peptide methionine sulfoxide reductase MsrA (215 aa).

Residue Cys-58 is part of the active site.

The protein belongs to the MsrA Met sulfoxide reductase family.

It carries out the reaction L-methionyl-[protein] + [thioredoxin]-disulfide + H2O = L-methionyl-(S)-S-oxide-[protein] + [thioredoxin]-dithiol. The catalysed reaction is [thioredoxin]-disulfide + L-methionine + H2O = L-methionine (S)-S-oxide + [thioredoxin]-dithiol. Has an important function as a repair enzyme for proteins that have been inactivated by oxidation. Catalyzes the reversible oxidation-reduction of methionine sulfoxide in proteins to methionine. This Pseudomonas savastanoi pv. phaseolicola (strain 1448A / Race 6) (Pseudomonas syringae pv. phaseolicola (strain 1448A / Race 6)) protein is Peptide methionine sulfoxide reductase MsrA.